The sequence spans 237 residues: uncharacterized protein (237 aa).

An ATP-binding site is contributed by 50 to 57; it reads APPGTGKS.

This is an uncharacterized protein from Escherichia coli (strain K12).